Here is a 291-residue protein sequence, read N- to C-terminus: Probable plasmid-partitioning protein ParB (291 aa).

The protein belongs to the ParB family.

This chain is Probable plasmid-partitioning protein ParB, found in Deinococcus radiodurans (strain ATCC 13939 / DSM 20539 / JCM 16871 / CCUG 27074 / LMG 4051 / NBRC 15346 / NCIMB 9279 / VKM B-1422 / R1).